The primary structure comprises 249 residues: Hydantoin racemase (249 aa).

Belongs to the HyuE racemase family. In terms of assembly, homohexamer.

It catalyses the reaction a D-5-monosubstituted hydantoin = a L-5-monosubstituted hydantoin. The catalysed reaction is D-5-[2-(methylsulfanyl)ethyl]hydantoin = L-5-[2-(methysulfanyl)ethyl]hydantoin. It carries out the reaction D-5-benzylhydantoin = L-5-benzylhydantoin. The enzyme catalyses D-5-isopropylhydantoin = L-5-isopropylhydantoin. It catalyses the reaction D-5-isobutylhydantoin = L-5-isobutylhydantoin. Its activity is regulated as follows. Strongly inhibited by Cu(2+) and Zn(2+). Slightly stimulated by the addition of Mn(2+) or Co(2+), but also by metal-chelating agents such as EDTA or EGTA, indicating that the enzyme is not a metalloenzyme. Functionally, involved in the asymmetric conversion of racemic 5-substituted hydantoins to the corresponding L-amino acids. Catalyzes the racemization via enolization of D- and L-5-monosubstituted hydantoins. Is able to racemize 5-substituted hydantoins having aromatic or aliphatic substituents such as 5-(2-methylthioethyl)hydantoin, 5-isopropylhydantoin, 5-isobutylhydantoin and 5-benzylhydantoin. This Pseudomonas sp. (strain NS671) protein is Hydantoin racemase.